Here is a 101-residue protein sequence, read N- to C-terminus: MAVKHLIVLKFKDEITEAQKEEFFKTYVNLVNIIPAMKDVYWGKDVTQKNKEEGYTHIVEVTFESVETIQDYIIHPAHVGFGDVYRSFWEKLLIFDYTPRK.

One can recognise a Stress-response A/B barrel domain in the interval 3-97 (VKHLIVLKFK…FWEKLLIFDY (95 aa)). Residue His5 coordinates 3,5,7-trioxododecanoyl-CoA. Mg(2+) is bound by residues Val31, Ile34, and Met37. Tyr72 lines the 3,5,7-trioxododecanoyl-CoA pocket. Catalysis depends on acid/base catalyst residues Tyr72 and His75.

As to quaternary structure, homodimer. As to expression, expressed in glandular trichomes and at lower levels in female flowers.

The protein resides in the cytoplasm. It carries out the reaction 3,5,7-trioxododecanoyl-CoA = olivetolate + CoA + H(+). It participates in secondary metabolite biosynthesis; terpenoid biosynthesis. Functionally, involved in the biosynthesis of cannabinoids-related terpenophenolic natural products, which have pharmacological activity. Polyketide cyclase which functions in concert with OLS/TKS to form olivetolic acid. Has no intrinsic polyketide synthase activity and requires the presence of OLS to produce olivetolic acid. This chain is Olivetolic acid cyclase, found in Cannabis sativa (Hemp).